An 821-amino-acid polypeptide reads, in one-letter code: Putative outer membrane usher protein YqiG (821 aa).

The N-terminal stretch at 1 to 20 (MSGNIGANPVIIIGCASAYA) is a signal peptide. An intrachain disulfide couples cysteine 798 to cysteine 817.

This sequence belongs to the fimbrial export usher family.

The protein localises to the cell outer membrane. Functionally, may be involved in H(2) production during fermentative growth. Involved in the export and assembly of a fimbrial subunit across the outer membrane. This Escherichia coli (strain K12) protein is Putative outer membrane usher protein YqiG (yqiG).